Consider the following 404-residue polypeptide: Double-stranded RNA-binding protein 5 (404 aa).

DRBM domains lie at 1–70 (MYKN…RLSL) and 87–155 (VYKN…SLKQ). Disordered stretches follow at residues 195–236 (RRRR…STEE), 263–320 (GGRT…RRNA), and 336–362 (RRRP…FSDP). Low complexity predominate over residues 263-280 (GGRTQDTASPAPAAAAAS). Positions 302–316 (AGAHAARRHAARQGG) are enriched in basic residues.

Its function is as follows. Binds double-stranded RNA. The sequence is that of Double-stranded RNA-binding protein 5 (DRB5) from Oryza sativa subsp. japonica (Rice).